We begin with the raw amino-acid sequence, 314 residues long: Testisin (314 aa).

Positions 1-19 are cleaved as a signal peptide; sequence MGARGALLLALLLARAGLR. Residues 20-41 constitute a propeptide that is removed on maturation; sequence KPESQEAAPLSGPCGRRVITSR. Disulfide bonds link Cys33–Cys157 and Cys67–Cys83. Positions 42-286 constitute a Peptidase S1 domain; it reads IVGGEDAELG…HFEWIQKLMA (245 aa). Residues His82 and Asp137 each act as charge relay system in the active site. N-linked (GlcNAc...) asparagine glycans are attached at residues Asn167 and Asn200. 3 disulfide bridges follow: Cys171/Cys244, Cys204/Cys223, and Cys234/Cys262. Ser238 acts as the Charge relay system in catalysis. N-linked (GlcNAc...) asparagine glycosylation occurs at Asn273. Ser288 carries GPI-anchor amidated serine lipidation. A propeptide spans 289-314 (removed in mature form); it reads GMSQPDPSWPLLFFPLLWALPLLGPV.

Belongs to the peptidase S1 family. As to expression, expressed predominantly in premeiotic testicular germ cells, mostly late pachytene and diplotene spermatocytes.

The protein resides in the cell membrane. Could regulate proteolytic events associated with testicular germ cell maturation. The chain is Testisin (PRSS21) from Homo sapiens (Human).